A 417-amino-acid chain; its full sequence is NADH-quinone oxidoreductase subunit D (417 aa).

It belongs to the complex I 49 kDa subunit family. As to quaternary structure, NDH-1 is composed of 14 different subunits. Subunits NuoB, C, D, E, F, and G constitute the peripheral sector of the complex.

Its subcellular location is the cell inner membrane. The catalysed reaction is a quinone + NADH + 5 H(+)(in) = a quinol + NAD(+) + 4 H(+)(out). In terms of biological role, NDH-1 shuttles electrons from NADH, via FMN and iron-sulfur (Fe-S) centers, to quinones in the respiratory chain. The immediate electron acceptor for the enzyme in this species is believed to be ubiquinone. Couples the redox reaction to proton translocation (for every two electrons transferred, four hydrogen ions are translocated across the cytoplasmic membrane), and thus conserves the redox energy in a proton gradient. The chain is NADH-quinone oxidoreductase subunit D from Alkalilimnicola ehrlichii (strain ATCC BAA-1101 / DSM 17681 / MLHE-1).